The sequence spans 233 residues: 5'-methylthioadenosine/S-adenosylhomocysteine nucleosidase (233 aa).

Glu-12 (proton acceptor) is an active-site residue. Substrate contacts are provided by residues Gly-78, Ile-152, and 173-174 (ME). Residue Asp-197 is the Proton donor of the active site.

Belongs to the PNP/UDP phosphorylase family. MtnN subfamily. In terms of assembly, homodimer.

The catalysed reaction is S-adenosyl-L-homocysteine + H2O = S-(5-deoxy-D-ribos-5-yl)-L-homocysteine + adenine. It catalyses the reaction S-methyl-5'-thioadenosine + H2O = 5-(methylsulfanyl)-D-ribose + adenine. The enzyme catalyses 5'-deoxyadenosine + H2O = 5-deoxy-D-ribose + adenine. It functions in the pathway amino-acid biosynthesis; L-methionine biosynthesis via salvage pathway; S-methyl-5-thio-alpha-D-ribose 1-phosphate from S-methyl-5'-thioadenosine (hydrolase route): step 1/2. Its function is as follows. Catalyzes the irreversible cleavage of the glycosidic bond in both 5'-methylthioadenosine (MTA) and S-adenosylhomocysteine (SAH/AdoHcy) to adenine and the corresponding thioribose, 5'-methylthioribose and S-ribosylhomocysteine, respectively. Also cleaves 5'-deoxyadenosine, a toxic by-product of radical S-adenosylmethionine (SAM) enzymes, into 5-deoxyribose and adenine. Thus, is required for in vivo function of the radical SAM enzymes biotin synthase and lipoic acid synthase, that are inhibited by 5'-deoxyadenosine accumulation. This chain is 5'-methylthioadenosine/S-adenosylhomocysteine nucleosidase, found in Sodalis glossinidius (strain morsitans).